Here is a 255-residue protein sequence, read N- to C-terminus: uncharacterized protein (255 aa).

Residues Ile13, Arg37, Asp55, Asn81, Tyr148, Lys152, Val180, and Thr182 each coordinate NADP(+). The Proton donor role is filled by Tyr148. Catalysis depends on Lys152, which acts as the Lowers pKa of active site Tyr.

This sequence belongs to the short-chain dehydrogenases/reductases (SDR) family.

Its function is as follows. Involved in osmoadaptation. This is an uncharacterized protein from Emericella nidulans (strain FGSC A4 / ATCC 38163 / CBS 112.46 / NRRL 194 / M139) (Aspergillus nidulans).